Reading from the N-terminus, the 251-residue chain is Triosephosphate isomerase (251 aa).

Residue Asn-9–Lys-11 coordinates substrate. His-95 serves as the catalytic Electrophile. Glu-167 serves as the catalytic Proton acceptor. Substrate contacts are provided by residues Gly-173, Ser-213, and Gly-234–Gly-235.

This sequence belongs to the triosephosphate isomerase family. In terms of assembly, homodimer.

The protein resides in the cytoplasm. The enzyme catalyses D-glyceraldehyde 3-phosphate = dihydroxyacetone phosphate. Its pathway is carbohydrate biosynthesis; gluconeogenesis. The protein operates within carbohydrate degradation; glycolysis; D-glyceraldehyde 3-phosphate from glycerone phosphate: step 1/1. Involved in the gluconeogenesis. Catalyzes stereospecifically the conversion of dihydroxyacetone phosphate (DHAP) to D-glyceraldehyde-3-phosphate (G3P). The polypeptide is Triosephosphate isomerase (Citrifermentans bemidjiense (strain ATCC BAA-1014 / DSM 16622 / JCM 12645 / Bem) (Geobacter bemidjiensis)).